The sequence spans 92 residues: Bombyxin A-9 (92 aa).

An N-terminal signal peptide occupies residues 1–19 (MKLLLAIALMLTTVMWAST). Gln-20 is subject to Pyrrolidone carboxylic acid. 3 disulfides stabilise this stretch: Cys-29/Cys-79, Cys-41/Cys-92, and Cys-78/Cys-83. A propeptide spans 50–71 (SDAQFASYGSAWLMPYSEGRDQ) (c peptide like).

The protein belongs to the insulin family. Heterodimer of a B chain and an A chain linked by two disulfide bonds.

Its subcellular location is the secreted. Brain peptide responsible for activation of prothoracic glands to produce ecdysone in insects. The sequence is that of Bombyxin A-9 (BBXA9) from Bombyx mori (Silk moth).